We begin with the raw amino-acid sequence, 120 residues long: MLVLANYFPILVFLGISLFIAVLALTMGWFFGPRRPDKAKLSPYECGFEAFQDARLPFDVRFYLVAILFIIFDLETAFLFPWAVVLRHIGWFGFWAMMVFLAILVVGFIYEWKRGALEWE.

Helical transmembrane passes span 10-30, 65-85, and 89-109; these read ILVFLGISLFIAVLALTMGWF, VAILFIIFDLETAFLFPWAVV, and IGWFGFWAMMVFLAILVVGFI.

The protein belongs to the complex I subunit 3 family. As to quaternary structure, NDH-1 is composed of 14 different subunits. Subunits NuoA, H, J, K, L, M, N constitute the membrane sector of the complex.

The protein resides in the cell inner membrane. The catalysed reaction is a quinone + NADH + 5 H(+)(in) = a quinol + NAD(+) + 4 H(+)(out). Functionally, NDH-1 shuttles electrons from NADH, via FMN and iron-sulfur (Fe-S) centers, to quinones in the respiratory chain. The immediate electron acceptor for the enzyme in this species is believed to be ubiquinone. Couples the redox reaction to proton translocation (for every two electrons transferred, four hydrogen ions are translocated across the cytoplasmic membrane), and thus conserves the redox energy in a proton gradient. The protein is NADH-quinone oxidoreductase subunit A of Coxiella burnetii (strain Dugway 5J108-111).